We begin with the raw amino-acid sequence, 359 residues long: uncharacterized protein (359 aa).

The Protein kinase domain maps to 43–309; it reads YHLIRKLGSG…VLDFLGDDWG (267 aa). ATP-binding positions include 49–57 and lysine 72; that span reads LGSGSYGRV. The active-site Proton acceptor is aspartate 163. The segment at 314–359 is disordered; that stretch reads REGPGVLGSAVSYEDREEGGSSLEEWTDEGDDSKSGGRTGTDGGAP. Over residues 350–359 the composition is skewed to gly residues; sequence GRTGTDGGAP.

Belongs to the protein kinase superfamily. Ser/Thr protein kinase family. STKL subfamily.

It catalyses the reaction L-seryl-[protein] + ATP = O-phospho-L-seryl-[protein] + ADP + H(+). The enzyme catalyses L-threonyl-[protein] + ATP = O-phospho-L-threonyl-[protein] + ADP + H(+). This is an uncharacterized protein from Homo sapiens (Human).